The chain runs to 613 residues: Ribosome-associated molecular chaperone SSB1 (613 aa).

The segment at 1–391 is nucleotide binding domain (NBD); it reads MAEGVFSGAI…ILTGSNLSDD (391 aa). ATP contacts are provided by residues 16–18, Lys73, 205–207, 271–278, and Gly342; these read TTY, GGT, and ERAKRTLS. An inter-domain linker region spans residues 392–402; it reads TKDLLLLDVAP. Residues 403–613 form a substrate binding domain (SBD) region; it reads LSLGVAMQGD…RVVTKAMATR (211 aa). A lid domain (SBDalpha) region spans residues 516–612; the sequence is SEDIEKMVSQ…KRVVTKAMAT (97 aa). The Nuclear export signal signature appears at 574–582; the sequence is VEAALADAF.

The protein belongs to the heat shock protein 70 family. Ssb-type Hsp70 subfamily. Binds to ribosomes. Binds close to the ribosomal tunnel exit via contacts with both ribosomal proteins and rRNA. Directly interacts with nascent polypeptides. This interaction is dependent on the ribosome-associated complex (RAC). Interacts with SSE1. Interacts with FES1.

It is found in the cytoplasm. The catalysed reaction is ATP + H2O = ADP + phosphate + H(+). In terms of biological role, ribosome-bound, Hsp70-type chaperone that assists in the cotranslational folding of newly synthesized proteins in the cytosol. Stimulates folding by interacting with nascent chains, binding to short, largely hydrophobic sequences exposed by unfolded proteins, thereby stabilizing longer, more slowly translated, and aggregation-prone nascent polypeptides and domains that cannot fold stably until fully synthesized. The Hsp70-protein substrate interaction depends on ATP-binding and on allosteric regulation between the NBD and the SBD. The ATP-bound state is characterized by a fast exchange rate of substrate (low affinity state), while in the ADP-bound state exchange is much slower (high affinity state). During the Hsp70 cycle, the chaperone switches between the ATP-bound state (open conformation) and the ADP-bound state (closed conformation) by major conformational rearrangements involving mainly the lid domain. Ssb cooperates with a specific Hsp40/Hsp70 co-chaperone termed the ribosome-associated complex (RAC), which stimulates the ATPase activity of the ribosome-associated pool of Ssbs and switches it to the high affinity substrate binding state. Hsp110 chaperone SSE1 and FES1 act as nucleotide exchange factors that cause substrate release. The chain is Ribosome-associated molecular chaperone SSB1 (SSB1) from Eremothecium gossypii (strain ATCC 10895 / CBS 109.51 / FGSC 9923 / NRRL Y-1056) (Yeast).